A 142-amino-acid polypeptide reads, in one-letter code: Large ribosomal subunit protein uL23 (142 aa).

It belongs to the universal ribosomal protein uL23 family.

Functionally, this protein binds to a specific region on the 26S rRNA. The chain is Large ribosomal subunit protein uL23 (RPL25) from Cyberlindnera jadinii (Torula yeast).